A 1218-amino-acid polypeptide reads, in one-letter code: Protein STICHEL (1218 aa).

The interval 24 to 136 is disordered; the sequence is AGRVLRDPGT…SDARNGGDSY (113 aa). Composition is skewed to polar residues over residues 32-46, 54-73, and 86-95; these read GTTS…SSRS, ASRN…SSTN, and WKTQKSSSEK. The Bipartite nuclear localization signal motif lies at 163 to 180; that stretch reads RKSNVGSCKKKSKKKISS. Short sequence motifs (PEST) lie at residues 273 to 304 and 425 to 449; these read RNPS…LPGR and RSQD…ETIR. 490 to 497 is an ATP binding site; sequence GPRGTGKT. Residues Cys509, Cys518, Cys521, and Cys524 each coordinate Zn(2+). Positions 762–788 form a coiled coil; the sequence is EADMEGLKHALKLLSEAEKQLRVSNDR. The tract at residues 802 to 828 is disordered; the sequence is MPSPGTTHTGSSRRQSSRATDDDPASV. A compositionally biased stretch (polar residues) spans 804–819; it reads SPGTTHTGSSRRQSSR. 2 short sequence motifs (bipartite nuclear localization signal) span residues 1178-1195 and 1196-1213; these read RRSK…SRRN and RKSR…RKAE.

The protein belongs to the DnaX/STICHEL family. Interacts with BLT. Ubiquitous.

The protein localises to the nucleus. Functionally, acts as a key regulator of trichome branching through an endoreduplication-independent pathway. The protein is Protein STICHEL (STI) of Arabidopsis thaliana (Mouse-ear cress).